The primary structure comprises 210 residues: Pyridoxine/pyridoxamine 5'-phosphate oxidase (210 aa).

Residues 7-10 and lysine 65 each bind substrate; that span reads REDY. Residues 60–65, 75–76, arginine 81, lysine 82, and glutamine 104 contribute to the FMN site; these read RMVLLK and FT. Positions 122, 126, and 130 each coordinate substrate. FMN is bound by residues 139–140 and tryptophan 183; that span reads QS. Residue 189–191 coordinates substrate; the sequence is RLH. Residue arginine 193 coordinates FMN.

The protein belongs to the pyridoxamine 5'-phosphate oxidase family. Homodimer. The cofactor is FMN.

It carries out the reaction pyridoxamine 5'-phosphate + O2 + H2O = pyridoxal 5'-phosphate + H2O2 + NH4(+). The catalysed reaction is pyridoxine 5'-phosphate + O2 = pyridoxal 5'-phosphate + H2O2. Its pathway is cofactor metabolism; pyridoxal 5'-phosphate salvage; pyridoxal 5'-phosphate from pyridoxamine 5'-phosphate: step 1/1. It participates in cofactor metabolism; pyridoxal 5'-phosphate salvage; pyridoxal 5'-phosphate from pyridoxine 5'-phosphate: step 1/1. Its function is as follows. Catalyzes the oxidation of either pyridoxine 5'-phosphate (PNP) or pyridoxamine 5'-phosphate (PMP) into pyridoxal 5'-phosphate (PLP). This Neisseria meningitidis serogroup C (strain 053442) protein is Pyridoxine/pyridoxamine 5'-phosphate oxidase.